A 706-amino-acid chain; its full sequence is uncharacterized protein (706 aa).

Coiled-coil stretches lie at residues 86-162 (TKNV…AKKI), 269-299 (DYLK…VNEL), and 337-427 (DDYI…QSDY).

This is an uncharacterized protein from Staphylococcus aureus (strain MRSA252).